The sequence spans 257 residues: Thiazole synthase (257 aa).

Residue Lys-97 is the Schiff-base intermediate with DXP of the active site. Residues Gly-158, 184 to 185 (AG), and 206 to 207 (NT) each bind 1-deoxy-D-xylulose 5-phosphate.

Belongs to the ThiG family. As to quaternary structure, homotetramer. Forms heterodimers with either ThiH or ThiS.

The protein localises to the cytoplasm. The catalysed reaction is [ThiS sulfur-carrier protein]-C-terminal-Gly-aminoethanethioate + 2-iminoacetate + 1-deoxy-D-xylulose 5-phosphate = [ThiS sulfur-carrier protein]-C-terminal Gly-Gly + 2-[(2R,5Z)-2-carboxy-4-methylthiazol-5(2H)-ylidene]ethyl phosphate + 2 H2O + H(+). It participates in cofactor biosynthesis; thiamine diphosphate biosynthesis. Its function is as follows. Catalyzes the rearrangement of 1-deoxy-D-xylulose 5-phosphate (DXP) to produce the thiazole phosphate moiety of thiamine. Sulfur is provided by the thiocarboxylate moiety of the carrier protein ThiS. In vitro, sulfur can be provided by H(2)S. The chain is Thiazole synthase from Phocaeicola vulgatus (strain ATCC 8482 / DSM 1447 / JCM 5826 / CCUG 4940 / NBRC 14291 / NCTC 11154) (Bacteroides vulgatus).